The chain runs to 410 residues: WD repeat-containing protein jip5 (410 aa).

WD repeat units follow at residues 9-48, 74-113, 119-160, 223-264, 273-316, and 320-357; these read PLSA…EEEH, RHKG…VENK, AKDG…SKVA, VSST…DQDE, GGGE…VVSE, and DETE…IGGE. Residues 41–65 form a disordered region; it reads PTEEEEEHSDDEQASVSSSRNGKGH. The segment covering 43 to 53 has biased composition (acidic residues); sequence EEEEEHSDDEQ. Residues 354–410 form a disordered region; it reads IGGEKRGFGGDSDDSDDDSDDSDHEPKQGDDSRRKRKKQKGKDRGKGPEIMAFADLD. The segment covering 364–376 has biased composition (acidic residues); that stretch reads DSDDSDDDSDDSD. Over residues 377–386 the composition is skewed to basic and acidic residues; that stretch reads HEPKQGDDSR.

The protein belongs to the WD repeat WDR55 family.

The protein localises to the nucleus. It is found in the nucleolus. The sequence is that of WD repeat-containing protein jip5 (jip5) from Emericella nidulans (strain FGSC A4 / ATCC 38163 / CBS 112.46 / NRRL 194 / M139) (Aspergillus nidulans).